The sequence spans 197 residues: Holliday junction branch migration complex subunit RuvA (197 aa).

Residues 1 to 63 (MIEFIRGYVD…EDVLALYGFH (63 aa)) form a domain I region. Positions 64–142 (TRQERMLFAK…AIVPDAFPNL (79 aa)) are domain II. The tract at residues 143–149 (FTEPLEE) is flexible linker. The interval 149–197 (ETNALSEAIEALKALGYADKEIQKVVPMLRQERLSTEGYIKLALQKLLK) is domain III.

It belongs to the RuvA family. Homotetramer. Forms an RuvA(8)-RuvB(12)-Holliday junction (HJ) complex. HJ DNA is sandwiched between 2 RuvA tetramers; dsDNA enters through RuvA and exits via RuvB. An RuvB hexamer assembles on each DNA strand where it exits the tetramer. Each RuvB hexamer is contacted by two RuvA subunits (via domain III) on 2 adjacent RuvB subunits; this complex drives branch migration. In the full resolvosome a probable DNA-RuvA(4)-RuvB(12)-RuvC(2) complex forms which resolves the HJ.

The protein localises to the cytoplasm. The RuvA-RuvB-RuvC complex processes Holliday junction (HJ) DNA during genetic recombination and DNA repair, while the RuvA-RuvB complex plays an important role in the rescue of blocked DNA replication forks via replication fork reversal (RFR). RuvA specifically binds to HJ cruciform DNA, conferring on it an open structure. The RuvB hexamer acts as an ATP-dependent pump, pulling dsDNA into and through the RuvAB complex. HJ branch migration allows RuvC to scan DNA until it finds its consensus sequence, where it cleaves and resolves the cruciform DNA. This is Holliday junction branch migration complex subunit RuvA from Anoxybacillus flavithermus (strain DSM 21510 / WK1).